The sequence spans 236 residues: Phosphoribosylaminoimidazole-succinocarboxamide synthase (236 aa).

This sequence belongs to the SAICAR synthetase family.

The catalysed reaction is 5-amino-1-(5-phospho-D-ribosyl)imidazole-4-carboxylate + L-aspartate + ATP = (2S)-2-[5-amino-1-(5-phospho-beta-D-ribosyl)imidazole-4-carboxamido]succinate + ADP + phosphate + 2 H(+). Its pathway is purine metabolism; IMP biosynthesis via de novo pathway; 5-amino-1-(5-phospho-D-ribosyl)imidazole-4-carboxamide from 5-amino-1-(5-phospho-D-ribosyl)imidazole-4-carboxylate: step 1/2. This is Phosphoribosylaminoimidazole-succinocarboxamide synthase from Pseudomonas putida (strain GB-1).